The chain runs to 517 residues: ATP synthase subunit alpha (517 aa).

An ATP-binding site is contributed by 175-182; it reads GDRQTGKT.

Belongs to the ATPase alpha/beta chains family. In terms of assembly, F-type ATPases have 2 components, CF(1) - the catalytic core - and CF(0) - the membrane proton channel. CF(1) has five subunits: alpha(3), beta(3), gamma(1), delta(1), epsilon(1). CF(0) has three main subunits: a(1), b(2) and c(9-12). The alpha and beta chains form an alternating ring which encloses part of the gamma chain. CF(1) is attached to CF(0) by a central stalk formed by the gamma and epsilon chains, while a peripheral stalk is formed by the delta and b chains.

The protein localises to the cell membrane. The catalysed reaction is ATP + H2O + 4 H(+)(in) = ADP + phosphate + 5 H(+)(out). Its function is as follows. Produces ATP from ADP in the presence of a proton gradient across the membrane. The alpha chain is a regulatory subunit. The chain is ATP synthase subunit alpha from Herpetosiphon aurantiacus (strain ATCC 23779 / DSM 785 / 114-95).